Reading from the N-terminus, the 483-residue chain is Triacylglycerol lipase ptl3 (483 aa).

The region spanning 141 to 340 (LILSGGGTFG…DNDIPHAKLT (200 aa)) is the PNPLA domain. The short motif at 145-150 (GGGTFG) is the GXGXXG element. The GXSXG motif lies at 172 to 176 (GSSAG). Catalysis depends on Ser-174, which acts as the Nucleophile. Asp-327 acts as the Proton acceptor in catalysis.

The protein localises to the cytoplasm. It is found in the lipid droplet. The catalysed reaction is a triacylglycerol + H2O = a diacylglycerol + a fatty acid + H(+). Lipid particle-localized triacylglycerol (TAG) lipase. The lipid droplet/particle is a lipid storage compartment which serves as a depot of energy and building blocks for membrane lipid biosynthesis. Involved in the mobilization of the non-polar storage lipids triacylglycerols (TAGs) from lipid particles by hydrolysis of TAGs, releasing and supplying specific fatty acids to the appropriate metabolic pathways. This Schizosaccharomyces pombe (strain 972 / ATCC 24843) (Fission yeast) protein is Triacylglycerol lipase ptl3 (ptl3).